A 135-amino-acid chain; its full sequence is Race-specific elicitor A4 (135 aa).

The first 18 residues, 1–18 (MHYTTLLLSTLLVGTALA), serve as a signal peptide directing secretion. Positions 19-29 (QPTNPPAKTPK) are excised as a propeptide. Residues 19 to 39 (QPTNPPAKTPKKAPKTQPYNP) form a disordered region. Residues 47–111 (DTKCMGPKDC…DYPNLSTCPV (65 aa)) form the Chitin-binding type-2 domain. Cys-86 and Cys-101 form a disulfide bridge. Residues 112–135 (KTPQPKPKKGGVGGKKASVGHPGY) are disordered.

Functionally, this necrosis-inducing peptide induces a hypersensitive response on Cf-4 tomato genotypes. Race-specific elicitors are compounds which only induce defense responses in genotypes of host plants which are resistant to the pathogenic race that produces the elicitor, but not in susceptible genotypes. This Passalora fulva (Tomato leaf mold) protein is Race-specific elicitor A4 (AVR4).